The primary structure comprises 267 residues: 3-methyl-2-oxobutanoate hydroxymethyltransferase (267 aa).

Mg(2+) is bound by residues D46 and D85. 3-methyl-2-oxobutanoate is bound by residues 46–47, D85, and K115; that span reads DS. E117 lines the Mg(2+) pocket. Catalysis depends on E184, which acts as the Proton acceptor.

It belongs to the PanB family. Homodecamer; pentamer of dimers. Mg(2+) is required as a cofactor.

The protein resides in the cytoplasm. It carries out the reaction 3-methyl-2-oxobutanoate + (6R)-5,10-methylene-5,6,7,8-tetrahydrofolate + H2O = 2-dehydropantoate + (6S)-5,6,7,8-tetrahydrofolate. Its pathway is cofactor biosynthesis; (R)-pantothenate biosynthesis; (R)-pantoate from 3-methyl-2-oxobutanoate: step 1/2. Functionally, catalyzes the reversible reaction in which hydroxymethyl group from 5,10-methylenetetrahydrofolate is transferred onto alpha-ketoisovalerate to form ketopantoate. This chain is 3-methyl-2-oxobutanoate hydroxymethyltransferase, found in Citrifermentans bemidjiense (strain ATCC BAA-1014 / DSM 16622 / JCM 12645 / Bem) (Geobacter bemidjiensis).